The primary structure comprises 350 residues: Induced myeloid leukemia cell differentiation protein Mcl-1 homolog (350 aa).

Residues lysine 5 and lysine 40 each participate in a glycyl lysine isopeptide (Lys-Gly) (interchain with G-Cter in ubiquitin) cross-link. Residues 104 to 175 (CASPPEEMEG…PAEEEEDELF (72 aa)) are PEST-like. Serine 121 carries the post-translational modification Phosphoserine. Lysine 136 participates in a covalent cross-link: Glycyl lysine isopeptide (Lys-Gly) (interchain with G-Cter in ubiquitin). A disordered region spans residues 148–170 (GEASSGPGTDGSLPSTPPPAEEE). Phosphoserine; by GSK3-alpha and GSK3-beta is present on serine 159. Serine 162 bears the Phosphoserine mark. At threonine 163 the chain carries Phosphothreonine; by MAPK. Glycyl lysine isopeptide (Lys-Gly) (interchain with G-Cter in ubiquitin) cross-links involve residues lysine 194 and lysine 197. Positions 209–223 (ALETLRRVGDGVQRN) match the BH3 motif. The BH1 signature appears at 252–272 (HVFSDGVTNWGRIVTLISFGA). The BH2 motif lies at 304–319 (DWLVKQRGWDGFVEFF). Residues 328–348 (IRNVLLAFAGVAGVGAGLAYL) traverse the membrane as a helical segment.

Belongs to the Bcl-2 family. As to quaternary structure, interacts with HIF3A (via C-terminus domain). Interacts with BOK, BIK, BAX, BAK1, and TPT1. Interacts with unphosphorylated BAD. Interacts with BMF, BBC3 and PMAIP1. Interacts with BOP. Interacts with BCL2L11; may sequester BCL2L11 to prevent its pro-apoptotic activity. Interacts with GIMAP5 and HSPA8/HSC70; the interaction between HSPA8 and MCL1 is impaired in the absence of GIMAP5. Cleaved by CASP3 during apoptosis, yielding a pro-apoptotic C-terminal fragment. Post-translationally, rapidly degraded in the absence of phosphorylation in the PEST region. In terms of processing, phosphorylated on Ser-159, by GSK3, in response to IL3/interleukin-3 withdrawal. Phosphorylation at Ser-159 induces ubiquitination and proteasomal degradation, abrogating the anti-apoptotic activity. Treatment with taxol or okadaic acid induces phosphorylation on additional sites. Ubiquitinated. Ubiquitination is induced by phosphorylation at Ser-159. Deubiquitinated by USP20; leading to increased stability.

The protein localises to the membrane. It is found in the cytoplasm. Its subcellular location is the mitochondrion. The protein resides in the nucleus. It localises to the nucleoplasm. Functionally, involved in the regulation of apoptosis versus cell survival, and in the maintenance of viability but not of proliferation. Mediates its effects by interactions with a number of other regulators of apoptosis. The protein is Induced myeloid leukemia cell differentiation protein Mcl-1 homolog (MCL1) of Felis catus (Cat).